A 328-amino-acid polypeptide reads, in one-letter code: Malate dehydrogenase (328 aa).

Position 12–18 (12–18 (GAAGQIG)) interacts with NAD(+). Substrate contacts are provided by R92 and R98. NAD(+) is bound by residues N105, Q112, and 129–131 (TGN). Substrate-binding residues include N131 and R162. The active-site Proton acceptor is H187.

Belongs to the LDH/MDH superfamily. MDH type 2 family.

It catalyses the reaction (S)-malate + NAD(+) = oxaloacetate + NADH + H(+). Its function is as follows. Catalyzes the reversible oxidation of malate to oxaloacetate. The polypeptide is Malate dehydrogenase (Nocardioides sp. (strain ATCC BAA-499 / JS614)).